The sequence spans 342 residues: DNA primase small subunit PriS (342 aa).

Active-site residues include Asp-97, Asp-99, and Asp-276.

Belongs to the eukaryotic-type primase small subunit family. Heterodimer of a small subunit (PriS) and a large subunit (PriL). The cofactor is Mg(2+). Requires Mn(2+) as cofactor.

Functionally, catalytic subunit of DNA primase, an RNA polymerase that catalyzes the synthesis of short RNA molecules used as primers for DNA polymerase during DNA replication. The small subunit contains the primase catalytic core and has DNA synthesis activity on its own. Binding to the large subunit stabilizes and modulates the activity, increasing the rate of DNA synthesis while decreasing the length of the DNA fragments, and conferring RNA synthesis capability. The DNA polymerase activity may enable DNA primase to also catalyze primer extension after primer synthesis. May also play a role in DNA repair. The chain is DNA primase small subunit PriS from Thermococcus sibiricus (strain DSM 12597 / MM 739).